Here is a 410-residue protein sequence, read N- to C-terminus: Peptidase T (410 aa).

A Zn(2+)-binding site is contributed by H78. Residue D80 is part of the active site. D140 provides a ligand contact to Zn(2+). The active-site Proton acceptor is the E174. Residues E175, D197, and H379 each coordinate Zn(2+).

This sequence belongs to the peptidase M20B family. Requires Zn(2+) as cofactor.

It is found in the cytoplasm. The catalysed reaction is Release of the N-terminal residue from a tripeptide.. Its function is as follows. Cleaves the N-terminal amino acid of tripeptides. This is Peptidase T from Vibrio atlanticus (strain LGP32) (Vibrio splendidus (strain Mel32)).